The following is a 60-amino-acid chain: Insect toxin mu-NPTX-Nc1a (60 aa).

An N-terminal signal peptide occupies residues 1–19 (MIYQVVLLLLVSPAPVSAA).

Contains 4 disulfide bonds. Expressed by the venom gland.

Its subcellular location is the secreted. Functionally, insect-specific toxin. Blocks voltage-gated potassium and sodium channels. This Trichonephila clavata (Joro spider) protein is Insect toxin mu-NPTX-Nc1a.